The following is a 492-amino-acid chain: Protein nucleotidyltransferase YdiU (492 aa).

The ATP site is built by G88, G90, R91, K111, D123, G124, R174, and R181. D250 functions as the Proton acceptor in the catalytic mechanism. Mg(2+) contacts are provided by N251 and D260. D260 contributes to the ATP binding site.

Belongs to the SELO family. It depends on Mg(2+) as a cofactor. The cofactor is Mn(2+).

It catalyses the reaction L-seryl-[protein] + ATP = 3-O-(5'-adenylyl)-L-seryl-[protein] + diphosphate. The enzyme catalyses L-threonyl-[protein] + ATP = 3-O-(5'-adenylyl)-L-threonyl-[protein] + diphosphate. It carries out the reaction L-tyrosyl-[protein] + ATP = O-(5'-adenylyl)-L-tyrosyl-[protein] + diphosphate. The catalysed reaction is L-histidyl-[protein] + UTP = N(tele)-(5'-uridylyl)-L-histidyl-[protein] + diphosphate. It catalyses the reaction L-seryl-[protein] + UTP = O-(5'-uridylyl)-L-seryl-[protein] + diphosphate. The enzyme catalyses L-tyrosyl-[protein] + UTP = O-(5'-uridylyl)-L-tyrosyl-[protein] + diphosphate. In terms of biological role, nucleotidyltransferase involved in the post-translational modification of proteins. It can catalyze the addition of adenosine monophosphate (AMP) or uridine monophosphate (UMP) to a protein, resulting in modifications known as AMPylation and UMPylation. The polypeptide is Protein nucleotidyltransferase YdiU (Rhodopseudomonas palustris (strain ATCC BAA-98 / CGA009)).